Reading from the N-terminus, the 476-residue chain is Proline--tRNA ligase 2 (476 aa).

The protein belongs to the class-II aminoacyl-tRNA synthetase family. ProS type 3 subfamily. As to quaternary structure, homodimer.

It is found in the cytoplasm. It carries out the reaction tRNA(Pro) + L-proline + ATP = L-prolyl-tRNA(Pro) + AMP + diphosphate. Its function is as follows. Catalyzes the attachment of proline to tRNA(Pro) in a two-step reaction: proline is first activated by ATP to form Pro-AMP and then transferred to the acceptor end of tRNA(Pro). The protein is Proline--tRNA ligase 2 of Bacillus thuringiensis (strain Al Hakam).